Here is a 529-residue protein sequence, read N- to C-terminus: Inosine-5'-monophosphate dehydrogenase (529 aa).

CBS domains lie at 129–185 and 189–246; these read MVTD…SKQV and MTKT…PLAT. Residues Asp283 and 334-336 each bind NAD(+); that span reads GVG. Gly336 and Gly338 together coordinate K(+). An IMP-binding site is contributed by Ser339. Position 341 (Cys341) interacts with K(+). The active-site Thioimidate intermediate is the Cys341. Residues 374–376, 397–398, and 421–425 contribute to the IMP site; these read DGG, GS, and YRGMG. Arg443 acts as the Proton acceptor in catalysis. Glu458 provides a ligand contact to IMP. K(+)-binding residues include Glu511, Ser512, and His513.

This sequence belongs to the IMPDH/GMPR family. Homotetramer. K(+) is required as a cofactor.

It carries out the reaction IMP + NAD(+) + H2O = XMP + NADH + H(+). Its pathway is purine metabolism; XMP biosynthesis via de novo pathway; XMP from IMP: step 1/1. With respect to regulation, mycophenolic acid (MPA) is a non-competitive inhibitor that prevents formation of the closed enzyme conformation by binding to the same site as the amobile flap. In contrast, mizoribine monophosphate (MZP) is a competitive inhibitor that induces the closed conformation. MPA is a potent inhibitor of mammalian IMPDHs but a poor inhibitor of the bacterial enzymes. MZP is a more potent inhibitor of bacterial IMPDH. Its function is as follows. Catalyzes the conversion of inosine 5'-phosphate (IMP) to xanthosine 5'-phosphate (XMP), the first committed and rate-limiting step in the de novo synthesis of guanine nucleotides, and therefore plays an important role in the regulation of cell growth. The sequence is that of Inosine-5'-monophosphate dehydrogenase from Mycobacterium leprae (strain TN).